A 118-amino-acid chain; its full sequence is Large ribosomal subunit protein uL24 (118 aa).

This sequence belongs to the universal ribosomal protein uL24 family. As to quaternary structure, part of the 50S ribosomal subunit.

In terms of biological role, one of two assembly initiator proteins, it binds directly to the 5'-end of the 23S rRNA, where it nucleates assembly of the 50S subunit. Functionally, one of the proteins that surrounds the polypeptide exit tunnel on the outside of the subunit. The sequence is that of Large ribosomal subunit protein uL24 from Prochlorococcus marinus (strain NATL1A).